Consider the following 318-residue polypeptide: MSDTAISNQRDTAAFPEGGMGSARDFFELLKPRVMSLVIFTALVGIAVAPGGIHPVIAFTALLCIAVGAGASGALNMWYDADIDARMARTANRPIPAGRVTAREAAVFGSILSVFAVMTMGVLVNWVAAALLAFTIFFYLVVYTMWLKRRTPQNIVIGGAAGAFPPMIGWAAVTGSVSIEPFVLFLIIFMWTPPHFWALALYRSGDYEKVGVPMLPVVSGEKETRRQIMLYSLALVPVTLLPGFLGFAGALYMGATAALGAGFLWLAFGIWRTEPGAAQDKAAKRLFGYSILYLFLIFSLLLVEKMLGLGGTAFALAL.

The next 9 membrane-spanning stretches (helical) occupy residues 37–57 (LVIFTALVGIAVAPGGIHPVI), 58–78 (AFTALLCIAVGAGASGALNMW), 100–120 (VTAREAAVFGSILSVFAVMTM), 122–142 (VLVNWVAAALLAFTIFFYLVV), 155–175 (IVIGGAAGAFPPMIGWAAVTG), 182–202 (FVLFLIIFMWTPPHFWALALY), 228–248 (IMLYSLALVPVTLLPGFLGFA), 251–271 (LYMGATAALGAGFLWLAFGIW), and 291–311 (ILYLFLIFSLLLVEKMLGLGG).

The protein belongs to the UbiA prenyltransferase family. Protoheme IX farnesyltransferase subfamily.

It localises to the cell inner membrane. The enzyme catalyses heme b + (2E,6E)-farnesyl diphosphate + H2O = Fe(II)-heme o + diphosphate. It participates in porphyrin-containing compound metabolism; heme O biosynthesis; heme O from protoheme: step 1/1. Its function is as follows. Converts heme B (protoheme IX) to heme O by substitution of the vinyl group on carbon 2 of heme B porphyrin ring with a hydroxyethyl farnesyl side group. The protein is Protoheme IX farnesyltransferase of Parvibaculum lavamentivorans (strain DS-1 / DSM 13023 / NCIMB 13966).